We begin with the raw amino-acid sequence, 212 residues long: MTNYKLDMQKRDKVGSNAVRKLRVKELIPGVIYGKDFEPINVTVDEKELRKVHLMAGTSSLIDVKVDGEEHTVIIKDVQKHPFKNHYVHVDFKEIKMGEVANFTIPVVLEGRDEIRLQPSVLMQLLDEVEIECLPKNLPNEAAVSVIDMQYGDTFEVKDLDVFKNPDIKVLNDETEAVCSLSEPKEEVIEEDVEEVSADVPTVSETEEEDAE.

Residues 181–212 (LSEPKEEVIEEDVEEVSADVPTVSETEEEDAE) are disordered. Residues 188–197 (VIEEDVEEVS) show a composition bias toward acidic residues.

The protein belongs to the bacterial ribosomal protein bL25 family. CTC subfamily. In terms of assembly, part of the 50S ribosomal subunit; part of the 5S rRNA/L5/L18/L25 subcomplex. Contacts the 5S rRNA. Binds to the 5S rRNA independently of L5 and L18.

In terms of biological role, this is one of the proteins that binds to the 5S RNA in the ribosome where it forms part of the central protuberance. This chain is Large ribosomal subunit protein bL25, found in Finegoldia magna (strain ATCC 29328 / DSM 20472 / WAL 2508) (Peptostreptococcus magnus).